Here is a 422-residue protein sequence, read N- to C-terminus: Retinoic acid receptor RXR-beta-B (422 aa).

A modulating region spans residues 1–89 (MNSLPPSTSA…SGPMLSQKRM (89 aa)). NR C4-type zinc fingers lie at residues 90–110 (CAICGDRSSGKHYGVYSCEGC) and 126–150 (CRDNKECLVDKRQRNRCQYCRYQKC). The segment at residues 90 to 155 (CAICGDRSSG…RYQKCLAMGM (66 aa)) is a DNA-binding region (nuclear receptor). Positions 156-178 (KREAVQEERQKNKERDGDYECSS) are hinge. The span at 161-173 (QEERQKNKERDGD) shows a compositional bias: basic and acidic residues. The disordered stretch occupies residues 161-182 (QEERQKNKERDGDYECSSSANE). The NR LBD domain maps to 181–421 (NEEMPVEKIL…TFLMEMLESP (241 aa)).

The protein belongs to the nuclear hormone receptor family. NR2 subfamily. Homodimer. Heterodimer; with a rar molecule. Binds DNA preferentially as a rar/rxr heterodimer. Heterodimerizes with rarga. As to expression, shows uniform expression from the blastula to mid-gastrula stages. At 12 hours post-fertilization (hpf), expressed ubiquitously but more weakly. At 24 hpf, restricted to the ventral diencephalon, pharangeal endoderm and trunk and tail mesoderm; mesoderm expression is in medial cells of each somite along the dorsoventral axis, forming stripes. At 48 hpf, expressed in forebrain, eye, midbrain and anterior hindbrain.

It localises to the nucleus. Its function is as follows. Receptor for retinoic acid. Retinoic acid receptors bind as heterodimers to their target response elements in response to their ligands, all-trans or 9-cis retinoic acid, and regulate gene expression in various biological processes. The rar/rxr heterodimers bind to the retinoic acid response elements (RARE) composed of tandem 5'-AGGTCA-3' sites known as DR1-DR5. The high affinity ligand for rxrs is 9-cis retinoic acid. This Danio rerio (Zebrafish) protein is Retinoic acid receptor RXR-beta-B (rxrbb).